The primary structure comprises 423 residues: ATP-citrate synthase alpha chain protein 2 (423 aa).

Citrate contacts are provided by asparagine 343, threonine 345, and arginine 376.

It belongs to the succinate/malate CoA ligase beta subunit family. Heterooctamer of 4 alpha and 4 beta chains.

It localises to the cytoplasm. Its subcellular location is the cytosol. It catalyses the reaction oxaloacetate + acetyl-CoA + ADP + phosphate = citrate + ATP + CoA. ATP citrate-lyase is the primary enzyme responsible for the synthesis of cytosolic acetyl-CoA, used for the elongation of fatty acids and biosynthesis of isoprenoids, flavonoids and malonated derivatives. May supply substrate to the cytosolic acetyl-CoA carboxylase, which generates the malonyl-CoA used for the synthesis of a multitude of compounds, including very long chain fatty acids and flavonoids. In contrast to all known animal ACL enzymes having a homomeric structure, plant ACLs are composed of alpha and beta chains. This Oryza sativa subsp. japonica (Rice) protein is ATP-citrate synthase alpha chain protein 2 (ACLA-2).